The primary structure comprises 241 residues: 3-oxoacyl-[acyl-carrier-protein] reductase FabG (241 aa).

Residues 13–16, Ser-38, 57–58, and Asn-83 each bind NADP(+); these read GASG and EV. Ser-135 provides a ligand contact to substrate. The Proton acceptor role is filled by Tyr-148. NADP(+) is bound by residues 148 to 152 and Ile-181; that span reads YCASK.

It belongs to the short-chain dehydrogenases/reductases (SDR) family. In terms of assembly, homotetramer.

The catalysed reaction is a (3R)-hydroxyacyl-[ACP] + NADP(+) = a 3-oxoacyl-[ACP] + NADPH + H(+). It participates in lipid metabolism; fatty acid biosynthesis. Catalyzes the NADPH-dependent reduction of beta-ketoacyl-ACP substrates to beta-hydroxyacyl-ACP products, the first reductive step in the elongation cycle of fatty acid biosynthesis. The protein is 3-oxoacyl-[acyl-carrier-protein] reductase FabG (fabG) of Rickettsia conorii (strain ATCC VR-613 / Malish 7).